The sequence spans 767 residues: DNA topoisomerase 1 (767 aa).

Over residues 1 to 23 (MSGDHLHNDSQIEADFRLNDSHK) the composition is skewed to basic and acidic residues. The disordered stretch occupies residues 1–201 (MSGDHLHNDS…NKKKKPKKEE (201 aa)). Serine 2 is modified (N-acetylserine). Phosphoserine occurs at positions 2 and 10. The segment covering 24 to 39 (HKDKHKDREHRHKEHK) has biased composition (basic residues). A compositionally biased stretch (basic and acidic residues) spans 40–110 (KDKEKDREKS…DAKIKKEKEN (71 aa)). A Phosphoserine modification is found at serine 59. Lysine 103 is covalently cross-linked (Glycyl lysine isopeptide (Lys-Gly) (interchain with G-Cter in SUMO2)). A Glycyl lysine isopeptide (Lys-Gly) (interchain with G-Cter in SUMO); alternate cross-link involves residue lysine 105. Lysine 105 participates in a covalent cross-link: Glycyl lysine isopeptide (Lys-Gly) (interchain with G-Cter in SUMO2); alternate. Serine 114 carries the post-translational modification Phosphoserine. A Glycyl lysine isopeptide (Lys-Gly) (interchain with G-Cter in SUMO); alternate cross-link involves residue lysine 119. A Glycyl lysine isopeptide (Lys-Gly) (interchain with G-Cter in SUMO2); alternate cross-link involves residue lysine 119. Residue lysine 119 forms a Glycyl lysine isopeptide (Lys-Gly) (interchain with G-Cter in SUMO1); alternate linkage. A compositionally biased stretch (basic and acidic residues) spans 131–168 (PKEDIKPLKRPRDEDDADYKPKKIKTEDIKKEKKRKLE). Glycyl lysine isopeptide (Lys-Gly) (interchain with G-Cter in SUMO2) cross-links involve residues lysine 136 and lysine 150. Lysine 155 participates in a covalent cross-link: Glycyl lysine isopeptide (Lys-Gly) (interchain with G-Cter in SUMO); alternate. Lysine 155 is covalently cross-linked (Glycyl lysine isopeptide (Lys-Gly) (interchain with G-Cter in SUMO2); alternate). Residues lysine 160 and lysine 166 each participate in a glycyl lysine isopeptide (Lys-Gly) (interchain with G-Cter in SUMO2) cross-link. A Glycyl lysine isopeptide (Lys-Gly) (interchain with G-Cter in SUMO2); alternate cross-link involves residue lysine 174. Lysine 174 carries the N6-acetyllysine; alternate modification. The span at 181–201 (KDKDKKGAESDNKKKKPKKEE) shows a compositional bias: basic and acidic residues. Residue lysine 206 forms a Glycyl lysine isopeptide (Lys-Gly) (interchain with G-Cter in SUMO2) linkage. At lysine 282 the chain carries N6-acetyllysine. Lysine 338 is covalently cross-linked (Glycyl lysine isopeptide (Lys-Gly) (interchain with G-Cter in SUMO2)). Interaction with DNA regions lie at residues 427 to 428 (KY) and 490 to 495 (RAGNEK). Residues 434 to 767 (SSRIKGEKDW…IDMTDEDYEF (334 aa)) enclose the Topo IB-type catalytic domain. Serine 508 carries the phosphoserine; by CK2 modification. A Glycyl lysine isopeptide (Lys-Gly) (interchain with G-Cter in SUMO2) cross-link involves residue lysine 551. Residues 587-589 (TAK) form an interaction with DNA region. Glycyl lysine isopeptide (Lys-Gly) (interchain with G-Cter in SUMO2) cross-links involve residues lysine 644, lysine 702, and lysine 714. Tyrosine 725 functions as the O-(3'-phospho-DNA)-tyrosine intermediate in the catalytic mechanism.

This sequence belongs to the type IB topoisomerase family. As to quaternary structure, monomer. Interacts with ERCC6. Interacts with TPRN; TPRN interacts with a number of DNA damage response proteins, is recruited to sites of DNA damage and may play a role in DNA damage repair. In terms of processing, sumoylated. Lys-119 is the main site of sumoylation. Sumoylation plays a role in partitioning TOP1 between nucleoli and nucleoplasm. Levels are dramatically increased on camptothecin (CPT) treatment. Phosphorylation at Ser-508 by CK2 increases binding to supercoiled DNA and sensitivity to camptothecin.

Its subcellular location is the nucleus. It is found in the nucleolus. The protein localises to the nucleoplasm. The catalysed reaction is ATP-independent breakage of single-stranded DNA, followed by passage and rejoining.. Specifically inhibited by camptothecin (CPT), a plant alkaloid with antitumor activity. Functionally, releases the supercoiling and torsional tension of DNA introduced during the DNA replication and transcription by transiently cleaving and rejoining one strand of the DNA duplex. Introduces a single-strand break via transesterification at a target site in duplex DNA. The scissile phosphodiester is attacked by the catalytic tyrosine of the enzyme, resulting in the formation of a DNA-(3'-phosphotyrosyl)-enzyme intermediate and the expulsion of a 5'-OH DNA strand. The free DNA strand then rotates around the intact phosphodiester bond on the opposing strand, thus removing DNA supercoils. Finally, in the religation step, the DNA 5'-OH attacks the covalent intermediate to expel the active-site tyrosine and restore the DNA phosphodiester backbone. Regulates the alternative splicing of tissue factor (F3) pre-mRNA in endothelial cells. Involved in the circadian transcription of the core circadian clock component BMAL1 by altering the chromatin structure around the ROR response elements (ROREs) on the BMAL1 promoter. The protein is DNA topoisomerase 1 (TOP1) of Cricetulus griseus (Chinese hamster).